We begin with the raw amino-acid sequence, 357 residues long: MSIVEQLQRQHLKQLTPYASARRSMSGGNIWLNANESPYSNSYTVDDSKLNRYPEFQSKPLNQAYAEYAGINASKVLSSRGSDEGIELLIRAFCEPGQDKVLICPPTYGMYAISAKTFAVGVTEVPLLNSGEVNNWQLDTESIIEAAAECKVIFLCSPSNPLGNALNTDDIEQVLQHSPRSIVVVDEAYIEFSSGDSVVSWLERYPNLVVLRTLSKAFALAGIRCGFLLANDDIIELLQKVLAPYPLPDPTVQIAVQALQTSSLERLQQQVATLLAERDRVQTALEQTPLTLVSESDTNFLLYQCEDAAGLVKSLTDNDLLIRNQSAQRGLENVVRITIGSAAENDELIQQLKDYFS.

Lys216 carries the post-translational modification N6-(pyridoxal phosphate)lysine.

It belongs to the class-II pyridoxal-phosphate-dependent aminotransferase family. Histidinol-phosphate aminotransferase subfamily. As to quaternary structure, homodimer. The cofactor is pyridoxal 5'-phosphate.

The catalysed reaction is L-histidinol phosphate + 2-oxoglutarate = 3-(imidazol-4-yl)-2-oxopropyl phosphate + L-glutamate. It functions in the pathway amino-acid biosynthesis; L-histidine biosynthesis; L-histidine from 5-phospho-alpha-D-ribose 1-diphosphate: step 7/9. This Idiomarina loihiensis (strain ATCC BAA-735 / DSM 15497 / L2-TR) protein is Histidinol-phosphate aminotransferase 2.